The primary structure comprises 339 residues: Retroviral-like aspartic protease 1 (339 aa).

Residues 1 to 188 (MRNPGGPGWA…SEPEEILFAN (188 aa)) constitute a propeptide that is removed on maturation. The segment at 34-53 (VPAPFNSSRQGKNTAQPTEP) is disordered. Residues 38–53 (FNSSRQGKNTAQPTEP) are compositionally biased toward polar residues. An N-linked (GlcNAc...) asparagine glycan is attached at asparagine 39. Residues 55 to 75 (LSSVIAPTLFCAFLYLACVTA) form a helical membrane-spanning segment. The Peptidase A2 domain occupies 205–286 (VRFLVDSGAQ…AEEAIIGTDV (82 aa)). Aspartate 210 is a catalytic residue. N-linked (GlcNAc...) asparagine glycosylation occurs at asparagine 274. Residues 325 to 339 (LIEEEEGSSAPEGSH) constitute a propeptide that is removed on maturation.

Homodimer. In terms of processing, undergoes autocleavage which is necessary for activation of the protein. In terms of tissue distribution, highly expressed in stratified epithelia in skin, tongue, esophagus, forestomach and vagina. Also expressed in trachea, urinary bladder and thymus. Undetectable in simple epithelia. Within the epidermis, expressed exclusively in the granular layer (at protein level). Levels are elevated in benign skin tumors but are down-regulated in squamous cell carcinomas.

It is found in the membrane. In terms of biological role, protease responsible for filaggrin processing, essential for the maintenance of a proper epidermis organization. In Mus musculus (Mouse), this protein is Retroviral-like aspartic protease 1.